The primary structure comprises 518 residues: Pre-glycoprotein polyprotein GP complex (518 aa).

Glycine 2 carries the N-myristoyl glycine; by host lipid modification. Over glycine 2–glutamate 17 the chain is Extracellular. A helical transmembrane segment spans residues alanine 18–lysine 33. Topologically, residues glycine 34–serine 58 are cytoplasmic. Cysteine 57 serves as a coordination point for Zn(2+). At histidine 59–aspartate 456 the chain is on the extracellular side. Cystine bridges form between cysteine 87/cysteine 258, cysteine 303/cysteine 316, cysteine 325/cysteine 334, and cysteine 388/cysteine 409. 5 N-linked (GlcNAc...) asparagine; by host glycosylation sites follow: asparagine 90, asparagine 112, asparagine 127, asparagine 180, and asparagine 251. Residues asparagine 389, asparagine 397, asparagine 414, and asparagine 419 are each glycosylated (N-linked (GlcNAc...) asparagine; by host). A helical transmembrane segment spans residues leucine 457–proline 477. Residues threonine 478–arginine 518 are Cytoplasmic-facing. The Zn(2+) site is built by histidine 479, histidine 481, cysteine 487, histidine 491, cysteine 499, and cysteine 501.

The protein belongs to the arenaviridae GPC protein family. As to quaternary structure, interacts with glycoprotein G2. Part of the GP complex (GP-C) together with glycoprotein G1 and glycoprotein G2. The GP-complex interacts with protein Z, which interacts with ribonucleocapsid; these interactions may induce virion budding. In terms of assembly, homotrimer; disulfide-linked. In pre-fusion state, G1 homotrimers bind G2 homotrimers via ionic interactions. Part of the GP complex (GP-C) together with glycoprotein G2 and the stable signal peptide. The GP-complex interacts with protein Z, which interacts with ribonucleocapsid; these interactions may induce virion budding. Homotrimer. Interacts with the stable signal peptide. In pre-fusion state, G2 homotrimers bind G1 homotrimers via ionic interactions. Part of the GP complex (GP-C) together with glycoprotein G1 and the stable signal peptide. Acidification in the endosome triggers rearrangements, which ultimately leads to a 6 helix bundle formed by the two heptad repeat domains (HR1 and HR2) in post-fusion state. The GP-complex interacts with protein Z, which interacts with ribonucleocapsid; these interactions may induce virion budding. Specific enzymatic cleavages in vivo yield mature proteins. GP-C polyprotein is cleaved in the endoplasmic reticulum by the host protease MBTPS1. Only cleaved glycoprotein is incorporated into virions. Post-translationally, the SSP remains stably associated with the GP complex following cleavage by signal peptidase and plays crucial roles in the trafficking of GP through the secretory pathway. In terms of processing, myristoylation is necessary for GP2-mediated fusion activity.

It localises to the virion membrane. Its subcellular location is the host endoplasmic reticulum membrane. The protein localises to the host Golgi apparatus membrane. The protein resides in the host cell membrane. In terms of biological role, functions as a cleaved signal peptide that is retained as the third component of the GP complex (GP-C). Helps to stabilize the spike complex in its native conformation. The SSP is required for efficient glycoprotein expression, post-translational maturation cleavage of G1 and G2, glycoprotein transport to the cell surface plasma membrane, formation of infectious virus particles, and acid pH-dependent glycoprotein-mediated cell fusion. Its function is as follows. Forms the virion spikes together with glycoprotein G2. The glycoprotein spike trimers are connected to the underlying matrix. Mediates virus attachment to host receptor alpha-dystroglycan DAG1. This attachment induces virion internalization predominantly through clathrin- and caveolin-independent endocytosis. Functionally, forms the virion spikes together with glycoprotein G1. The glycoprotein spike trimers are connected to the underlying matrix. Class I viral fusion protein that directs fusion of viral and host endosomal membranes, leading to delivery of the nucleocapsid into the cytoplasm. Membrane fusion is mediated by irreversible conformational changes induced by acidification. This is Pre-glycoprotein polyprotein GP complex from Bolomys (OLVV).